Reading from the N-terminus, the 254-residue chain is Acetylglutamate kinase (254 aa).

Substrate contacts are provided by residues 40 to 41 (GG), arginine 62, and asparagine 158.

Belongs to the acetylglutamate kinase family. ArgB subfamily.

Its subcellular location is the cytoplasm. The enzyme catalyses N-acetyl-L-glutamate + ATP = N-acetyl-L-glutamyl 5-phosphate + ADP. Its pathway is amino-acid biosynthesis; L-arginine biosynthesis; N(2)-acetyl-L-ornithine from L-glutamate: step 2/4. Its function is as follows. Catalyzes the ATP-dependent phosphorylation of N-acetyl-L-glutamate. The protein is Acetylglutamate kinase of Chloroflexus aggregans (strain MD-66 / DSM 9485).